The primary structure comprises 593 residues: Inactive metallocarboxypeptidase ECM14 (593 aa).

A signal peptide spans 1 to 22 (MHFSVRLSLLLTLASSLPLVSA). A propeptide spanning residues 23 to 184 (IPQHEDQAYT…QTIYESYPKT (162 aa)) is cleaved from the precursor. The tract at residues 180-210 (SYPKTNPSSPSQQGPTTRRFSPSASTSKTKP) is disordered. Residues 182–210 (PKTNPSSPSQQGPTTRRFSPSASTSKTKP) show a composition bias toward polar residues. Positions 220-546 (DYQPLSVLLP…RAMVAMGKFL (327 aa)) constitute a Peptidase M14 domain. Residues histidine 285 and glutamate 288 each coordinate Zn(2+). Residues 285–288 (HARE), arginine 343, and 360–361 (DH) each bind substrate. Cysteine 354 and cysteine 377 are disulfide-bonded. A glycan (N-linked (GlcNAc...) asparagine) is linked at asparagine 370. Histidine 417 provides a ligand contact to Zn(2+). 418-419 (SY) is a binding site for substrate. Residues 557–593 (NGPHAAEETQNYDDDFEEDEAEEDSDVFRAQGDDMSS) form a disordered region. Residues 566-581 (QNYDDDFEEDEAEEDS) are compositionally biased toward acidic residues.

This sequence belongs to the peptidase M14 family. The cofactor is Zn(2+).

The protein localises to the vacuole. The protein resides in the secreted. Inactive carboxypeptidase that may play a role in cell wall organization and biogenesis. This is Inactive metallocarboxypeptidase ECM14 (ECM14) from Arthroderma gypseum (strain ATCC MYA-4604 / CBS 118893) (Microsporum gypseum).